A 103-amino-acid polypeptide reads, in one-letter code: Large ribosomal subunit protein uL24 (103 aa).

It belongs to the universal ribosomal protein uL24 family. In terms of assembly, part of the 50S ribosomal subunit.

Functionally, one of two assembly initiator proteins, it binds directly to the 5'-end of the 23S rRNA, where it nucleates assembly of the 50S subunit. One of the proteins that surrounds the polypeptide exit tunnel on the outside of the subunit. This is Large ribosomal subunit protein uL24 from Vesicomyosocius okutanii subsp. Calyptogena okutanii (strain HA).